Here is a 170-residue protein sequence, read N- to C-terminus: Adenine phosphoribosyltransferase (170 aa).

The protein belongs to the purine/pyrimidine phosphoribosyltransferase family. As to quaternary structure, homodimer.

The protein resides in the cytoplasm. It carries out the reaction AMP + diphosphate = 5-phospho-alpha-D-ribose 1-diphosphate + adenine. The protein operates within purine metabolism; AMP biosynthesis via salvage pathway; AMP from adenine: step 1/1. Catalyzes a salvage reaction resulting in the formation of AMP, that is energically less costly than de novo synthesis. The polypeptide is Adenine phosphoribosyltransferase (Lactococcus lactis subsp. cremoris (strain SK11)).